Consider the following 182-residue polypeptide: Large ribosomal subunit protein uL10 (182 aa).

This sequence belongs to the universal ribosomal protein uL10 family. In terms of assembly, part of the ribosomal stalk of the 50S ribosomal subunit. The N-terminus interacts with L11 and the large rRNA to form the base of the stalk. The C-terminus forms an elongated spine to which L12 dimers bind in a sequential fashion forming a multimeric L10(L12)X complex.

Forms part of the ribosomal stalk, playing a central role in the interaction of the ribosome with GTP-bound translation factors. This chain is Large ribosomal subunit protein uL10, found in Gluconacetobacter diazotrophicus (strain ATCC 49037 / DSM 5601 / CCUG 37298 / CIP 103539 / LMG 7603 / PAl5).